We begin with the raw amino-acid sequence, 167 residues long: Small ribosomal subunit protein uS5 (167 aa).

Residues 12-75 (LQEKLVQVNR…EAARRNMIQV (64 aa)) enclose the S5 DRBM domain.

This sequence belongs to the universal ribosomal protein uS5 family. In terms of assembly, part of the 30S ribosomal subunit. Contacts proteins S4 and S8.

With S4 and S12 plays an important role in translational accuracy. In terms of biological role, located at the back of the 30S subunit body where it stabilizes the conformation of the head with respect to the body. The polypeptide is Small ribosomal subunit protein uS5 (Alcanivorax borkumensis (strain ATCC 700651 / DSM 11573 / NCIMB 13689 / SK2)).